A 638-amino-acid polypeptide reads, in one-letter code: Golgin subfamily A member 8S (638 aa).

Residues 1–11 (MWPQARLPPHP) show a composition bias toward pro residues. The interval 1–84 (MWPQARLPPH…GESPTSSATL (84 aa)) is disordered. Residues 50 to 62 (TNGSIHETATSGG) show a composition bias toward polar residues. 3 coiled-coil regions span residues 105 to 160 (VSQL…LNTD), 223 to 275 (LEQS…MSQE), and 318 to 417 (EAEL…QQKQ). Disordered stretches follow at residues 427–453 (ALPGEGDGGGHLDSEGEEAPRPIPSIP), 510–532 (KDAALGGGHHQAGAQGGDEDEAA), and 556–575 (AHNPADEPGPGAPAPQELGA). Basic and acidic residues predominate over residues 434-446 (GGGHLDSEGEEAP). Residues 514–525 (LGGGHHQAGAQG) show a composition bias toward gly residues. Over residues 561 to 574 (DEPGPGAPAPQELG) the composition is skewed to low complexity.

Belongs to the GOLGA8 family.

The chain is Golgin subfamily A member 8S from Homo sapiens (Human).